We begin with the raw amino-acid sequence, 27 residues long: Cysteine-rich venom protein tropirin (27 aa).

It belongs to the CRISP family. In terms of processing, contains 8 disulfide bonds. In terms of tissue distribution, expressed by the venom gland.

The protein localises to the secreted. Functionally, blocks contraction of smooth muscle elicited by high potassium-induced depolarization, but does not block caffeine-stimulated contraction. May target voltage-gated calcium channels on smooth muscle. The protein is Cysteine-rich venom protein tropirin of Tropidechis carinatus (Australian rough-scaled snake).